Reading from the N-terminus, the 257-residue chain is Receptor expression-enhancing protein 4 (257 aa).

2 consecutive transmembrane segments (helical) span residues 1-21 (MVSW…YPAY) and 42-62 (WIVF…ISWF). Ser152 and Ser194 each carry phosphoserine. The disordered stretch occupies residues 159–257 (IPDTSAPTYQ…KKTIPSDLDS (99 aa)). Thr196 is subject to Phosphothreonine. At Ser202 the chain carries Phosphoserine. Residue Thr250 is modified to Phosphothreonine. A Phosphoserine modification is found at Ser253.

Belongs to the DP1 family.

Its subcellular location is the endoplasmic reticulum membrane. Functionally, microtubule-binding protein required to ensure proper cell division and nuclear envelope reassembly by sequestering the endoplasmic reticulum away from chromosomes during mitosis. Probably acts by clearing the endoplasmic reticulum membrane from metaphase chromosomes. The sequence is that of Receptor expression-enhancing protein 4 (Reep4) from Rattus norvegicus (Rat).